The following is a 505-amino-acid chain: DDB1- and CUL4-associated factor 17 (505 aa).

A run of 2 helical transmembrane segments spans residues 186–206 (VLLYLAVFRVLPFSLVGILEI) and 222–242 (GILIVMYSSGLVRLYSFQAII).

In terms of assembly, interacts with DDB1, CUL4A and CUL4B.

It localises to the membrane. It is found in the nucleus. The protein localises to the nucleolus. It participates in protein modification; protein ubiquitination. Its function is as follows. May function as a substrate receptor for CUL4-DDB1 E3 ubiquitin-protein ligase complex. The polypeptide is DDB1- and CUL4-associated factor 17 (Dcaf17) (Rattus norvegicus (Rat)).